The sequence spans 359 residues: MRNRFGCLFSLTTWGESHGPSIGLVIDGCPAGLPLSLEDFVPVMLRRSPGRLGTSQRKEADIVHILSGVYQGKTTGTPIALQIFNTDIDSETYRKQDDRYRPGHGQFAYEKKYGIVDPLGGGRSSARETACRVAAGVVAAKLLAHYDIYCLAFLSKLGKESIKEYPQFTHEFAQSVYSSPFLSPLASDTITKQLMDLQKEKDSLGGVVSFITSPIHESLGEPIFYKVQAVLASALMSIPAAKGFEIGLGFASADKYGSEYIDPFIFEEGKISMSSNNCGGSLGGITMGMPLNGRVAFKPTSSIKQPRLTVMKTGEPTVYSTPKEGRHDPCVAIRAVGVVEAMVNLVLADLLLQQRCSRL.

R47 is a binding site for NADP(+). Residues 123-125 (RSS), G283, 298-302 (KPTSS), and R326 contribute to the FMN site.

This sequence belongs to the chorismate synthase family. As to quaternary structure, homotetramer. It depends on FMNH2 as a cofactor.

It catalyses the reaction 5-O-(1-carboxyvinyl)-3-phosphoshikimate = chorismate + phosphate. The protein operates within metabolic intermediate biosynthesis; chorismate biosynthesis; chorismate from D-erythrose 4-phosphate and phosphoenolpyruvate: step 7/7. In terms of biological role, catalyzes the anti-1,4-elimination of the C-3 phosphate and the C-6 proR hydrogen from 5-enolpyruvylshikimate-3-phosphate (EPSP) to yield chorismate, which is the branch point compound that serves as the starting substrate for the three terminal pathways of aromatic amino acid biosynthesis. This reaction introduces a second double bond into the aromatic ring system. The sequence is that of Chorismate synthase from Chlamydia felis (strain Fe/C-56) (Chlamydophila felis).